Here is a 724-residue protein sequence, read N- to C-terminus: N-alpha-acetyltransferase 35, NatC auxiliary subunit (724 aa).

Belongs to the MAK10 family. In terms of assembly, component of the N-terminal acetyltransferase C (NatC) complex.

The protein resides in the cytoplasm. Functionally, auxillary component of the N-terminal acetyltransferase C (NatC) complex which catalyzes acetylation of N-terminal methionine residues. N-terminal acetylation protects proteins from ubiquitination and degradation by the N-end rule pathway. Regulates cell proliferation during embryonic development. This chain is N-alpha-acetyltransferase 35, NatC auxiliary subunit (naa35), found in Danio rerio (Zebrafish).